A 256-amino-acid polypeptide reads, in one-letter code: Beta-fibrinogenase-like (256 aa).

The signal sequence occupies residues 1–18 (MVLIKVLANLLVLQLSYA). Residues 19 to 24 (QKSSEL) constitute a propeptide that is removed on maturation. A Peptidase S1 domain is found at 25 to 247 (VVGGDECNIN…YTDWIQSIIA (223 aa)). Disulfide bonds link Cys-31–Cys-161, Cys-49–Cys-65, Cys-96–Cys-254, Cys-140–Cys-208, Cys-172–Cys-187, and Cys-198–Cys-223. Asn-44 is a glycosylation site (N-linked (GlcNAc...) asparagine). His-64 functions as the Charge relay system in the catalytic mechanism. N-linked (GlcNAc...) asparagine glycans are attached at residues Asn-78 and Asn-101. Asp-108 acts as the Charge relay system in catalysis. A glycan (N-linked (GlcNAc...) asparagine) is linked at Asn-152. The active-site Charge relay system is Ser-202.

It belongs to the peptidase S1 family. Snake venom subfamily. Monomer. As to expression, expressed by the venom gland.

The protein resides in the secreted. Functionally, snake venom serine protease that has fibrinogenolytic activities by hydrolyzing the beta chain of fibrinogen (FGB). Typical arginine esterase which hydrolyzes esters and amides of arginine. The sequence is that of Beta-fibrinogenase-like from Daboia siamensis (Eastern Russel's viper).